The following is an 884-amino-acid chain: Chondroitin sulfate synthase 3 (884 aa).

Residues 1-7 are Cytoplasmic-facing; sequence MAVRSRR. The chain crosses the membrane as a helical; Signal-anchor for type II membrane protein span at residues 8–28; sequence PWVSVALGLVLGFTAASWLIA. Over 29–884 the chain is Lumenal; that stretch reads PRVAELSEKR…LGVRDNRTLS (856 aa). The tract at residues 47 to 164 is disordered; the sequence is YYGRSATGPR…NGSGDGGAAV (118 aa). Composition is skewed to low complexity over residues 60–69 and 84–96; these read QQLLPQPQSR and PGPQ…PGGP. Asn155 and Asn281 each carry an N-linked (GlcNAc...) asparagine glycan. A disordered region spans residues 437 to 456; sequence SNSEVSKEDQQLGRTPSFNH. A glycan (N-linked (GlcNAc...) asparagine) is linked at Asn712. Positions 722 and 836 each coordinate a divalent metal cation. The N-linked (GlcNAc...) asparagine glycan is linked to Asn880.

Belongs to the chondroitin N-acetylgalactosaminyltransferase family. Requires Co(2+) as cofactor. Mn(2+) serves as cofactor. It depends on Cd(2+) as a cofactor.

Its subcellular location is the golgi apparatus. It localises to the golgi stack membrane. The catalysed reaction is 3-O-(beta-D-GlcA-(1-&gt;3)-beta-D-GalNAc-(1-&gt;4)-beta-D-GlcA-(1-&gt;3)-beta-D-Gal-(1-&gt;3)-beta-D-Gal-(1-&gt;4)-beta-D-Xyl)-L-seryl-[protein] + UDP-N-acetyl-alpha-D-galactosamine = 3-O-(beta-D-GalNAc-(1-&gt;4)-beta-D-GlcA-(1-&gt;3)-beta-D-GalNAc-(1-&gt;4)-beta-D-GlcA-(1-&gt;3)-beta-D-Gal-(1-&gt;3)-beta-D-Gal-(1-&gt;4)-beta-D-Xyl)-L-seryl-[protein] + UDP + H(+). It catalyses the reaction 3-O-{beta-D-GlcA-(1-&gt;3)-[beta-D-GalNAc-(1-&gt;4)-beta-D-GlcA-(1-&gt;3)](n)-beta-D-GalNAc-(1-&gt;4)-beta-D-GlcA-(1-&gt;3)-beta-D-Gal-(1-&gt;3)-beta-D-Gal-(1-&gt;4)-beta-D-Xyl}-L-seryl-[protein] + UDP-N-acetyl-alpha-D-galactosamine = 3-O-{[beta-D-GalNAc-(1-&gt;4)-beta-D-GlcA-(1-&gt;3)](n+1)-beta-D-GalNAc-(1-&gt;4)-beta-D-GlcA-(1-&gt;3)-beta-D-Gal-(1-&gt;3)-beta-D-Gal-(1-&gt;4)-beta-D-Xyl}-L-seryl-[protein] + UDP + H(+). It carries out the reaction 3-O-(beta-D-GalNAc-(1-&gt;4)-beta-D-GlcA-(1-&gt;3)-beta-D-Gal-(1-&gt;3)-beta-D-Gal-(1-&gt;4)-beta-D-Xyl)-L-seryl-[protein] + UDP-alpha-D-glucuronate = 3-O-(beta-D-GlcA-(1-&gt;3)-beta-D-GalNAc-(1-&gt;4)-beta-D-GlcA-(1-&gt;3)-beta-D-Gal-(1-&gt;3)-beta-D-Gal-(1-&gt;4)-beta-D-Xyl)-L-seryl-[protein] + UDP + H(+). The enzyme catalyses 3-O-{[beta-D-GalNAc-(1-&gt;4)-beta-D-GlcA-(1-&gt;3)](n)-beta-D-GalNAc-(1-&gt;4)-beta-D-GlcA-(1-&gt;3)-beta-D-Gal-(1-&gt;3)-beta-D-Gal-(1-&gt;4)-beta-D-Xyl}-L-seryl-[protein] + UDP-alpha-D-glucuronate = 3-O-{beta-D-GlcA-(1-&gt;3)-[beta-D-GalNAc-(1-&gt;4)-beta-D-GlcA-(1-&gt;3)](n)-beta-D-GalNAc-(1-&gt;4)-beta-D-GlcA-(1-&gt;3)-beta-D-Gal-(1-&gt;3)-beta-D-Gal-(1-&gt;4)-beta-D-Xyl}-L-seryl-[protein] + UDP + H(+). In terms of biological role, has both beta-1,3-glucuronic acid and beta-1,4-N-acetylgalactosamine transferase activity. Transfers glucuronic acid (GlcUA) from UDP-GlcUA and N-acetylgalactosamine (GalNAc) from UDP-GalNAc to the non-reducing end of the elongating chondroitin polymer. Specific activity is much reduced compared to CHSY1. The protein is Chondroitin sulfate synthase 3 (Chsy3) of Mus musculus (Mouse).